The primary structure comprises 564 residues: Arginine--tRNA ligase (564 aa).

The short motif at 130-140 is the 'HIGH' region element; it reads ANPTGSLHIGH.

The protein belongs to the class-I aminoacyl-tRNA synthetase family. Monomer.

The protein resides in the cytoplasm. The catalysed reaction is tRNA(Arg) + L-arginine + ATP = L-arginyl-tRNA(Arg) + AMP + diphosphate. This Malacoplasma penetrans (strain HF-2) (Mycoplasma penetrans) protein is Arginine--tRNA ligase.